The following is a 1191-amino-acid chain: Puratrophin-1 (1191 aa).

2 disordered regions span residues 1–152 (MERP…DPVG) and 707–728 (AGGG…SDPR). S64 bears the Phosphoserine mark. Polar residues predominate over residues 111-120 (SHLSLAQGES). Positions 732–908 (RLQLVLAEMV…HFQLRHGNDL (177 aa)) constitute a DH domain. The 108-residue stretch at 920–1027 (NLKEQGQLVR…WTADISHLLW (108 aa)) folds into the PH domain. The segment at 1150-1176 (SLTAEDSEISSQCPSASGSSGSDSSCV) is disordered. Residues 1159–1176 (SSQCPSASGSSGSDSSCV) show a composition bias toward low complexity.

Expressed in kidney, Leydig cells in the testis, epithelial cells in the prostate gland and Langerhans islet in the pancreas. Isoform 1 and isoform 3 are strongly expressed in Purkinje cells and to a lower extent in other neurons (at protein level). Widely expressed at low levels. More strongly expressed in testis and pancreas.

Functionally, possible role in intracellular signaling and cytoskeleton dynamics at the Golgi. This is Puratrophin-1 (PLEKHG4) from Homo sapiens (Human).